Consider the following 259-residue polypeptide: Small ribosomal subunit protein eS1 (259 aa).

The protein belongs to the eukaryotic ribosomal protein eS1 family. Component of the small ribosomal subunit. Mature ribosomes consist of a small (40S) and a large (60S) subunit. The 40S subunit contains about 33 different proteins and 1 molecule of RNA (18S). The 60S subunit contains about 49 different proteins and 3 molecules of RNA (25S, 5.8S and 5S).

The protein resides in the cytoplasm. This is Small ribosomal subunit protein eS1 from Monosiga brevicollis (Choanoflagellate).